The chain runs to 74 residues: ATP synthase subunit c (74 aa).

2 helical membrane passes run 8 to 28 and 52 to 72; these read FIGTGLMAIGMYGAALGVSNI and IGAGLAEAMGLFSFVIAMLLI.

This sequence belongs to the ATPase C chain family. F-type ATPases have 2 components, F(1) - the catalytic core - and F(0) - the membrane proton channel. F(1) has five subunits: alpha(3), beta(3), gamma(1), delta(1), epsilon(1). F(0) has three main subunits: a(1), b(2) and c(10-14). The alpha and beta chains form an alternating ring which encloses part of the gamma chain. F(1) is attached to F(0) by a central stalk formed by the gamma and epsilon chains, while a peripheral stalk is formed by the delta and b chains.

Its subcellular location is the cell inner membrane. Its function is as follows. F(1)F(0) ATP synthase produces ATP from ADP in the presence of a proton or sodium gradient. F-type ATPases consist of two structural domains, F(1) containing the extramembraneous catalytic core and F(0) containing the membrane proton channel, linked together by a central stalk and a peripheral stalk. During catalysis, ATP synthesis in the catalytic domain of F(1) is coupled via a rotary mechanism of the central stalk subunits to proton translocation. In terms of biological role, key component of the F(0) channel; it plays a direct role in translocation across the membrane. A homomeric c-ring of between 10-14 subunits forms the central stalk rotor element with the F(1) delta and epsilon subunits. This is ATP synthase subunit c from Rickettsia conorii (strain ATCC VR-613 / Malish 7).